We begin with the raw amino-acid sequence, 86 residues long: Palustrin-3b (86 aa).

The N-terminal stretch at 1–22 is a signal peptide; sequence MFTLKKPLLLIVLLGIISLSLC. Residues 23–36 constitute a propeptide that is removed on maturation; it reads EQERNADEDEESEI. A disulfide bond links Cys81 and Cys86.

In terms of tissue distribution, expressed by the skin glands.

The protein resides in the secreted. In terms of biological role, antimicrobial peptide. This chain is Palustrin-3b, found in Odorrana versabilis (Chinese bamboo leaf odorous frog).